The sequence spans 100 residues: CCAAT/enhancer-binding protein homolog 2 (100 aa).

Disordered regions lie at residues Met1 to Glu60 and Ala79 to Val100. The region spanning Glu17–Tyr80 is the bZIP domain. The tract at residues Lys23–Lys48 is basic motif. Positions Arg24 to Asn83 form a coiled coil. Residues Arg39–Glu60 show a composition bias toward basic and acidic residues. The leucine-zipper stretch occupies residues Leu52 to Leu73. Over residues Gly88–Val100 the composition is skewed to pro residues.

This sequence belongs to the bZIP family. C/EBP subfamily. As to quaternary structure, interacts with transcription factor zip-11. In terms of tissue distribution, expressed broadly in somatic tissues including the intestine.

The protein localises to the nucleus. Transcription factor that binds to the promoter and the enhancer regions of target genes. Regulates expression of genes involved in fat metabolism, including ech-1.1 and fat-5. Has a protective role in response to infection by the Gram-negative bacterium P.aeruginosa. Required for the activation of infection response gene irg-1 following P.aeruginosa infection. Required to prevent P.aeruginosa ToxA-mediated lethality. May also function in concert with transcription factor zip-11 to mediate immune responses, independently of the pmk-1/p38 MAPK pathway. May act together with the bZIP transcription factor, zip-2. The chain is CCAAT/enhancer-binding protein homolog 2 from Caenorhabditis elegans.